The primary structure comprises 191 residues: Cytochrome c oxidase assembly protein CtaG (191 aa).

Residues 1 to 9 (MALNGPQKT) are Cytoplasmic-facing. A helical; Signal-anchor for type II membrane protein membrane pass occupies residues 10 to 30 (VVQLVSVVVVMGGLAWASVPF). Topologically, residues 31–191 (YDWFCRVTGF…LDAGEKTNTN (161 aa)) are periplasmic.

The protein belongs to the COX11/CtaG family.

It is found in the cell inner membrane. In terms of biological role, exerts its effect at some terminal stage of cytochrome c oxidase synthesis, probably by being involved in the insertion of the copper B into subunit I. The sequence is that of Cytochrome c oxidase assembly protein CtaG from Ruegeria pomeroyi (strain ATCC 700808 / DSM 15171 / DSS-3) (Silicibacter pomeroyi).